The chain runs to 229 residues: MATTSTGPLHPYWPRHLRLDHFVPNDLSAWYIVTVLFTVFGALVVTMWLLSSRASVVPLGTWRRLSVCWFAVCAFVHLVIEGWFVLYQKAILGDQAFLSQLWKEYAKGDSRYIIEDNFIICMESITVVLWGPLSLWAVIAFLRQHPSRYVLQFVISLGQIYGDLLYFLTEYRDGFQHGEMGHPIYFWFYFFFMNVLWLVIPGVLFFDSVKQFYGAQNALDTKVMKSKGK.

The next 4 helical transmembrane spans lie at 30–50 (WYIV…MWLL), 67–87 (VCWF…FVLY), 119–139 (IICM…WAVI), and 186–206 (FWFY…VLFF). In terms of domain architecture, EXPERA spans 62-205 (WRRLSVCWFA…LWLVIPGVLF (144 aa)).

It belongs to the EBP family. As to expression, highly expressed in liver, bowel, adrenal gland, testis, ovary, and uterus and less expressed in brain, cerebellum, skeletal muscle, and heart.

Its subcellular location is the endoplasmic reticulum membrane. It localises to the nucleus envelope. It is found in the cytoplasmic vesicle. It carries out the reaction lathosterol = 5alpha-cholest-8-en-3beta-ol. It catalyses the reaction zymosterol = 5alpha-cholesta-7,24-dien-3beta-ol. The catalysed reaction is 5,6alpha-epoxy-5alpha-cholestan-3beta-ol + H2O = 5alpha-cholestane-3beta,5,6beta-triol. The enzyme catalyses 5,6beta-epoxy-5beta-cholestan-3beta-ol + H2O = 5alpha-cholestane-3beta,5,6beta-triol. The protein operates within steroid biosynthesis; cholesterol biosynthesis. Its function is as follows. Isomerase that catalyzes the conversion of Delta(8)-sterols to their corresponding Delta(7)-isomers. Component of the microsomal antiestrogen binding site (AEBS), a multiproteic complex at the ER membrane that consists of an association between EBP and 7-dehydrocholesterol reductase/DHCR7. This complex is responsible for cholesterol-5,6-epoxide hydrolase (ChEH) activity, which consists in the hydration of cholesterol-5,6-epoxides (5,6-EC) into cholestane-3beta,5alpha,6beta-triol (CT). The precise role of each component of this complex has not been described yet. The sequence is that of 3-beta-hydroxysteroid-Delta(8),Delta(7)-isomerase (EBP) from Cavia porcellus (Guinea pig).